The primary structure comprises 259 residues: MAVLTMKQLLEAGVHFGHRTQRWNPKMKEYIFGARKGIYIIDLQKTSKLLDEAYNFVRDKAAEGGTILFVGTKKQAQQVIKQEAERCGAFYVNHRWLGGLLTNFETIRKRIDKLIELEEMEANGEFDHLPKKEQSRLRRILEKLRKNLGGLKNMTSLPDVIYIVDPRKERNAVYEANLLKIPTVAIVDTNCDPDEIDYIIPGNDDAIRAIQLITSKIADAYLEGREGVSFGSEEAEENNQKEDNEEIFEIEDVDESEEM.

The interval 228 to 259 is disordered; it reads VSFGSEEAEENNQKEDNEEIFEIEDVDESEEM. Residues 233–259 show a composition bias toward acidic residues; that stretch reads EEAEENNQKEDNEEIFEIEDVDESEEM.

This sequence belongs to the universal ribosomal protein uS2 family.

In Thermosipho africanus (strain TCF52B), this protein is Small ribosomal subunit protein uS2.